The chain runs to 448 residues: 4-hydroxybenzoate transporter PcaK (448 aa).

Over 1-30 (MNQAQNSVGKSLDVQSFINQQPLSRYQWRV) the chain is Cytoplasmic. The helical transmembrane segment at 31-51 (VLLCFLIVFLDGLDTAAMGFI) threads the bilayer. At 52 to 67 (APALSQEWGIDRASLG) the chain is on the periplasmic side. The helical transmembrane segment at 68–88 (PVMSAALIGMVFGALGSGPLA) threads the bilayer. Topologically, residues 89–94 (DRFGRK) are cytoplasmic. Residues 95–115 (GVLVGAVLVFGGFSLASAYAT) traverse the membrane as a helical segment. The Periplasmic segment spans residues 116 to 119 (NVDQ). The helical transmembrane segment at 120–140 (LLVLRFLTGLGLGAGMPNATT) threads the bilayer. Residues 141–152 (LLSEYTPERLKS) are Cytoplasmic-facing. The chain crosses the membrane as a helical span at residues 153–173 (LLVTSMFCGFNLGMAGGGFIS). The Periplasmic segment spans residues 174-184 (AKMIPAYGWHS). Residues 185-205 (LLVIGGVLPLLLALVLMVWLP) form a helical membrane-spanning segment. Residues 206-261 (ESARFLVVRNRGTDKIRKTLSPIAPQVVAEAGSFSVPEQKAVAARSVFAVIFSGTY) lie on the Cytoplasmic side of the membrane. The chain crosses the membrane as a helical span at residues 262 to 282 (GLGTMLLWLTYFMGLVIVYLL). Residues 283–301 (TSWLPTLMRDSGASMEQAA) lie on the Periplasmic side of the membrane. A helical membrane pass occupies residues 302–322 (FIGALFQFGGVLSAVGVGWAM). Over 323–329 (DRYNPHK) the chain is Cytoplasmic. Residues 330–350 (VIGIFYLLAGVFAYAVGQSLG) traverse the membrane as a helical segment. Residue Asn351 is a topological domain, periplasmic. The helical transmembrane segment at 352 to 372 (ITVLATLVLIAGMCVNGAQSA) threads the bilayer. The Cytoplasmic segment spans residues 373–398 (MPSLAARFYPTQGRATGVSWMLGIGR). A helical transmembrane segment spans residues 399-419 (FGAILGAWSGATLLGLGWNFE). The Periplasmic segment spans residues 420–421 (QV). Residues 422 to 442 (LTALLVPAALATVGVIVKGLV) form a helical membrane-spanning segment. At 443 to 448 (SHADAT) the chain is on the cytoplasmic side.

Belongs to the major facilitator superfamily. Aromatic acid:H(+) symporter (AAHS) (TC 2.A.1.15) family.

Its subcellular location is the cell inner membrane. Transports 4-hydroxybenzoate (4-HBA) and protocatechuate across the membrane. Driven by the proton motive force. Also functions as a chemoreceptor, which is required for chemotaxis to aromatic acids. This Pseudomonas putida (Arthrobacter siderocapsulatus) protein is 4-hydroxybenzoate transporter PcaK (pcaK).